A 102-amino-acid chain; its full sequence is Small ribosomal subunit protein uS10 (102 aa).

It belongs to the universal ribosomal protein uS10 family. As to quaternary structure, part of the 30S ribosomal subunit.

Functionally, involved in the binding of tRNA to the ribosomes. The sequence is that of Small ribosomal subunit protein uS10 from Lactococcus lactis subsp. lactis (strain IL1403) (Streptococcus lactis).